The following is a 210-amino-acid chain: Guanylate kinase (210 aa).

Residues 6–184 (GTLYIISAPS…ALQDLKCIIQ (179 aa)) form the Guanylate kinase-like domain. Position 13 to 20 (13 to 20 (APSGAGKT)) interacts with ATP.

Belongs to the guanylate kinase family.

It localises to the cytoplasm. It catalyses the reaction GMP + ATP = GDP + ADP. Essential for recycling GMP and indirectly, cGMP. This is Guanylate kinase from Nitrosospira multiformis (strain ATCC 25196 / NCIMB 11849 / C 71).